A 63-amino-acid chain; its full sequence is MVHEYDNTLKVCLVRSLIGVPSRHRLSVRALGLRKVSDMRKVNDTPQVRGLIKKVHYLVRIQD.

The protein belongs to the universal ribosomal protein uL30 family. Part of the 50S ribosomal subunit.

In Xylella fastidiosa (strain 9a5c), this protein is Large ribosomal subunit protein uL30.